The chain runs to 365 residues: DNA replication and repair protein RecF (365 aa).

30–37 (GDNAQGKT) contacts ATP.

This sequence belongs to the RecF family.

Its subcellular location is the cytoplasm. Its function is as follows. The RecF protein is involved in DNA metabolism; it is required for DNA replication and normal SOS inducibility. RecF binds preferentially to single-stranded, linear DNA. It also seems to bind ATP. This Alkaliphilus oremlandii (strain OhILAs) (Clostridium oremlandii (strain OhILAs)) protein is DNA replication and repair protein RecF.